A 319-amino-acid chain; its full sequence is Beta-xylosidase (319 aa).

The Proton acceptor role is filled by D14. Residue E222 is the Proton donor of the active site.

It belongs to the glycosyl hydrolase 43 family.

It carries out the reaction Hydrolysis of (1-&gt;4)-beta-D-xylans, to remove successive D-xylose residues from the non-reducing termini.. Its function is as follows. Exoxylanase capable of acting on certain xylans and xylooligosaccharides. This is Beta-xylosidase (xynB) from Xylanibacter ruminicola (Prevotella ruminicola).